The chain runs to 226 residues: Putative type II restriction enzyme MjaVIP (226 aa).

It belongs to the BsaWI type II restriction endonuclease family.

The catalysed reaction is Endonucleolytic cleavage of DNA to give specific double-stranded fragments with terminal 5'-phosphates.. Its function is as follows. A P subtype restriction enzyme that recognizes the double-stranded sequence 5'-CCGG-3'; the cleavage site is unknown. The polypeptide is Putative type II restriction enzyme MjaVIP (mjaVIRP) (Methanocaldococcus jannaschii (strain ATCC 43067 / DSM 2661 / JAL-1 / JCM 10045 / NBRC 100440) (Methanococcus jannaschii)).